Consider the following 736-residue polypeptide: Phosphoribosylformylglycinamidine synthase subunit PurL (736 aa).

The active site involves histidine 50. The ATP site is built by tyrosine 53 and lysine 92. Glutamate 94 serves as a coordination point for Mg(2+). Substrate contacts are provided by residues serine 95 to histidine 98 and arginine 117. Histidine 96 functions as the Proton acceptor in the catalytic mechanism. Residue aspartate 118 coordinates Mg(2+). A substrate-binding site is contributed by glutamine 241. Aspartate 269 provides a ligand contact to Mg(2+). Glutamate 313–glutamine 315 contributes to the substrate binding site. The ATP site is built by aspartate 495 and glycine 532. Mg(2+) is bound at residue asparagine 533. Residue serine 535 coordinates substrate.

This sequence belongs to the FGAMS family. Monomer. Part of the FGAM synthase complex composed of 1 PurL, 1 PurQ and 2 PurS subunits.

The protein resides in the cytoplasm. It catalyses the reaction N(2)-formyl-N(1)-(5-phospho-beta-D-ribosyl)glycinamide + L-glutamine + ATP + H2O = 2-formamido-N(1)-(5-O-phospho-beta-D-ribosyl)acetamidine + L-glutamate + ADP + phosphate + H(+). The protein operates within purine metabolism; IMP biosynthesis via de novo pathway; 5-amino-1-(5-phospho-D-ribosyl)imidazole from N(2)-formyl-N(1)-(5-phospho-D-ribosyl)glycinamide: step 1/2. Functionally, part of the phosphoribosylformylglycinamidine synthase complex involved in the purines biosynthetic pathway. Catalyzes the ATP-dependent conversion of formylglycinamide ribonucleotide (FGAR) and glutamine to yield formylglycinamidine ribonucleotide (FGAM) and glutamate. The FGAM synthase complex is composed of three subunits. PurQ produces an ammonia molecule by converting glutamine to glutamate. PurL transfers the ammonia molecule to FGAR to form FGAM in an ATP-dependent manner. PurS interacts with PurQ and PurL and is thought to assist in the transfer of the ammonia molecule from PurQ to PurL. The chain is Phosphoribosylformylglycinamidine synthase subunit PurL from Bartonella quintana (strain Toulouse) (Rochalimaea quintana).